The primary structure comprises 106 residues: Serine rich endogenous peptide 7 (106 aa).

The N-terminal stretch at 1-26 is a signal peptide; that stretch reads MGKKCSSKFRQMLVLVLLLIVFTCLS. Basic and acidic residues-rich tracts occupy residues 46 to 56 and 65 to 77; these read GIEDEGQERTH and RSVEKTHHSEGRR. Residues 46-106 form a disordered region; it reads GIEDEGQERT…GGGRIPVAAS (61 aa). 2 consecutive short sequence motifs (SCOOP motif) follow at residues 58 to 72 and 86 to 100; these read LNSKKSSRSVEKTHH and GIRAGPSKSGQGGGR. 2 consecutive short sequence motifs (sxS motif essential for MIK2 binding) follow at residues 64–66 and 92–94; these read SRS and SKS.

This sequence belongs to the serine rich endogenous peptide (SCOOP) phytocytokine family. In terms of assembly, interacts with MIK2 (via extracellular leucine-rich repeat domain); this interaction triggers the formation of complex between MIK2 and the BAK1/SERK3 and SERK4 coreceptors, and subsequent BAK1 activation by phosphorylation. As to expression, mostly expressed in roots, and, to a lower extent, in seedlings shoots.

It is found in the cell membrane. The protein resides in the secreted. The protein localises to the extracellular space. It localises to the apoplast. Brassicaceae-specific phytocytokine (plant endogenous peptide released into the apoplast) perceived by MIK2 in a BAK1/SERK3 and SERK4 coreceptors-dependent manner, that modulates various physiological and antimicrobial processes including growth prevention and reactive oxygen species (ROS) response regulation. This Arabidopsis thaliana (Mouse-ear cress) protein is Serine rich endogenous peptide 7.